Reading from the N-terminus, the 137-residue chain is Large ribosomal subunit protein uL16 (137 aa).

This sequence belongs to the universal ribosomal protein uL16 family. In terms of assembly, part of the 50S ribosomal subunit.

Its function is as follows. Binds 23S rRNA and is also seen to make contacts with the A and possibly P site tRNAs. The chain is Large ribosomal subunit protein uL16 from Endomicrobium trichonymphae.